The sequence spans 1437 residues: Protein SUPPRESSOR OF npr1-1, CONSTITUTIVE 1 (1437 aa).

Met1 is subject to N-acetylmethionine. The 164-residue stretch at 19 to 182 (RRYDVFPSFR…ELAEDVLRKT (164 aa)) folds into the TIR domain. Position 28-33 (28-33 (RGEDVR)) interacts with NAD(+). Glu93 is an active-site residue. LRR repeat units lie at residues 554-576 (MRNL…VYLP), 577-598 (LKLR…TFKA), 600-621 (YLVN…TLPL), 622-645 (GSLK…SLAI), 647-668 (LEEL…IQNA), 670-691 (KLIY…DLNL), 692-715 (ESLE…KMGC), 781-805 (LGSL…SKAT), 807-828 (LESL…IGNL), 829-851 (HRLV…DVNL), 852-875 (SSLE…STNI), 877-895 (WLYL…IGNL), 897-918 (RLVR…DVNL), 919-939 (SSLE…PLIS), 940-962 (ESIK…SKAT), 964-985 (LKNL…IGNL), 1009-1029 (SSLM…PLIS), 1030-1052 (TNIV…IGNL), 1054-1075 (RLVK…DVNL), 1076-1096 (SSLM…PLIS), 1097-1121 (TRIE…DFTR), 1123-1143 (TVLM…IFRL), and 1161-1185 (LSDA…NIEY).

It belongs to the disease resistance TIR-NB-LRR family. In terms of assembly, homodimer. Interacts (via TIR domain) with TPR1. Interacts with EDS1. Interacts with SRFR1. Interacts with HSP90-3. Binds to MORC1/CRT1. Interacts with TRAF1B. In terms of processing, met-1 is specifically acetylated by N-terminal acetyltransferase complex A (NatA). The NatA-mediated acetylation serves as a degradation signal. Met-1 is specifically acetylated by N-terminal acetyltransferase complex B (NatB). The NatB-mediated acetylation stabilizes SNC1. In terms of tissue distribution, expressed in guard cells and epidermal cells, but not detected in mesophyll cells.

The protein resides in the cytoplasm. It localises to the microsome. The protein localises to the nucleus. The enzyme catalyses NAD(+) + H2O = ADP-D-ribose + nicotinamide + H(+). In terms of biological role, disease resistance protein of the TIR-NB-LRR-type. Part of the RPP5 locus that contains a cluster of several paralogous disease resistance (R) genes. Resistance proteins guard the plant against pathogens that contain an appropriate avirulence protein via an indirect interaction with this avirulence protein. That triggers a defense system including the hypersensitive response, which restricts the pathogen growth. Probably acts as a NAD(+) hydrolase (NADase): in response to activation, catalyzes cleavage of NAD(+) into ADP-D-ribose (ADPR) and nicotinamide; NAD(+) cleavage triggering a defense system that promotes cell death. Expression regulated by MOS1 at chromatin level. Nuclear localization of SNC1 is essential for its activity. ABA deficiency can rescue high-temperature inhibition of SNC1-mediated defense responses. This chain is Protein SUPPRESSOR OF npr1-1, CONSTITUTIVE 1, found in Arabidopsis thaliana (Mouse-ear cress).